A 230-amino-acid polypeptide reads, in one-letter code: Uracil phosphoribosyltransferase (230 aa).

Residue 38 to 42 (KGLVK) participates in GTP binding. Residues Arg87, Arg112, and 140 to 148 (DPMIATGST) each bind 5-phospho-alpha-D-ribose 1-diphosphate. Uracil-binding positions include Ile204 and 209–211 (GDA). Residue Asp210 participates in 5-phospho-alpha-D-ribose 1-diphosphate binding.

Belongs to the UPRTase family. Mg(2+) is required as a cofactor.

It catalyses the reaction UMP + diphosphate = 5-phospho-alpha-D-ribose 1-diphosphate + uracil. It participates in pyrimidine metabolism; UMP biosynthesis via salvage pathway; UMP from uracil: step 1/1. Its activity is regulated as follows. Allosterically activated by GTP. In terms of biological role, catalyzes the conversion of uracil and 5-phospho-alpha-D-ribose 1-diphosphate (PRPP) to UMP and diphosphate. The chain is Uracil phosphoribosyltransferase from Thermococcus kodakarensis (strain ATCC BAA-918 / JCM 12380 / KOD1) (Pyrococcus kodakaraensis (strain KOD1)).